Reading from the N-terminus, the 175-residue chain is NADH-ubiquinone oxidoreductase chain 6 (175 aa).

The next 5 helical transmembrane spans lie at 1–21 (MMTYIVFILSIVFVMSFVGFA), 25–45 (SPIYGGLVLIISGGIGCAIVL), 47–67 (FGGSFLGLMVFLIYLGGMLVV), 88–108 (AVLAAFITGLLSELLTACYIL), and 149–169 (YGTWLVVVTGWSLLIGVLVIM).

This sequence belongs to the complex I subunit 6 family. Core subunit of respiratory chain NADH dehydrogenase (Complex I) which is composed of 45 different subunits.

It is found in the mitochondrion inner membrane. It carries out the reaction a ubiquinone + NADH + 5 H(+)(in) = a ubiquinol + NAD(+) + 4 H(+)(out). Its function is as follows. Core subunit of the mitochondrial membrane respiratory chain NADH dehydrogenase (Complex I) which catalyzes electron transfer from NADH through the respiratory chain, using ubiquinone as an electron acceptor. Essential for the catalytic activity and assembly of complex I. This Canis lupus familiaris (Dog) protein is NADH-ubiquinone oxidoreductase chain 6 (MT-ND6).